The primary structure comprises 498 residues: Glutathione synthetase large chain (498 aa).

Arg128 is a binding site for substrate. Glu146 is an ATP binding site. Positions 146 and 148 each coordinate Mg(2+). Substrate is bound by residues 150–153, 233–235, Gln239, and 291–294; these read ISVS, ERN, and RVGY. Lys330 lines the ATP pocket. Ser356 bears the Phosphoserine mark. ATP is bound by residues 387–396, Tyr398, 420–423, and Glu446; these read KPQREGGGNN and MRYI. Residue Glu391 participates in Mg(2+) binding. Arg473 is a substrate binding site. The ATP site is built by Lys475 and Glu481. A substrate-binding site is contributed by 484-485; the sequence is VA.

This sequence belongs to the eukaryotic GSH synthase family. As to quaternary structure, heterodimer composed of a large and a small chain. The cofactor is Mg(2+).

The catalysed reaction is gamma-L-glutamyl-L-cysteine + glycine + ATP = glutathione + ADP + phosphate + H(+). It functions in the pathway sulfur metabolism; glutathione biosynthesis; glutathione from L-cysteine and L-glutamate: step 2/2. The polypeptide is Glutathione synthetase large chain (gsa1) (Schizosaccharomyces pombe (strain 972 / ATCC 24843) (Fission yeast)).